The sequence spans 356 residues: MIVTGSQVRQGLNTWFVLPLRRTAIGLGCAGVATLFSACGQTQALITNQTIQGFVDQVVVPSYVSVAAGATQLEQALQTYQQAPTAANLEAARQAWRVARDRWEQTECFAFGPADSEGFDGAMDTWPIDRQGLKTAAAQPVEQREDSRKGFHAIEELLFAATEPTLSDRQHLVILATDLTKQAQGLVTRWQQASDQPAYRSVLLSAGSTDSAYPTLNAAGTEIVQGLVDSLSEVASEKIGGPLETQEPDRFESFVSRNTLSDLRNNWTGAWNVYRGQRSDGVAAGSLQQRLQQQHPVIAQQLDQQFATARQALWAIPEPIETNLASPRGKVAVLTAQTAIAAVSDTLERQVLPLVQ.

Residues M1–A44 form the signal peptide. Hydrophilic stretches follow at residues Q75 to E145 and G240 to R310.

As to quaternary structure, the iron-regulated protein A is one unit of the protein complex CPVI-4, which is synthesized under iron deficient conditions.

The protein resides in the cell inner membrane. In terms of biological role, irpA occurs under iron-deficient growth conditions in cyanobacterium Synechococcus and disappears in cells recovering from iron starvation. It seems to be involved in iron acquisition, uptake or storage. This Synechococcus elongatus (strain ATCC 33912 / PCC 7942 / FACHB-805) (Anacystis nidulans R2) protein is Iron-regulated protein A (irpA).